A 211-amino-acid chain; its full sequence is Large ribosomal subunit protein uL3 (211 aa).

Positions 116 to 142 (GTSGVMKKHGFSGNRASHGVSRNHRLG) are disordered.

The protein belongs to the universal ribosomal protein uL3 family. In terms of assembly, part of the 50S ribosomal subunit. Forms a cluster with proteins L14 and L19.

In terms of biological role, one of the primary rRNA binding proteins, it binds directly near the 3'-end of the 23S rRNA, where it nucleates assembly of the 50S subunit. The polypeptide is Large ribosomal subunit protein uL3 (Fusobacterium nucleatum subsp. nucleatum (strain ATCC 25586 / DSM 15643 / BCRC 10681 / CIP 101130 / JCM 8532 / KCTC 2640 / LMG 13131 / VPI 4355)).